The primary structure comprises 860 residues: MSNSLPVPVSLNEYLAHLPMSDEQRAELAGCKTFAELHERLSAQPVNDPAEAAQASVGRRLTLTTADQLEDAEMLGVDASGRLCLKATPPIRRTKVVPEPWRTNILVRGWRRLTGKTNPPKPEHDDLPRDLPKARWRTVGSIRRYILLILMLGQTIVAGWYMKGILPYQGWSLVSLDEITRQTFVQTALQVMPYALQTSILLLFGILFCWVSAGFWTALMGFLELLTGRDKYRISGASAGNEPIEKGARTALVMPICNEDVPRVFAGLRATFESVAATGDLDRFDFFVLSDTNETDIAVAEQQAWLDVCRETKGFGKIFYRRRRRRVKRKSGNLDDFCRRWGGEYRYMVVLDADSVMSGECLTSLVRLMEATPDAGIIQTAPRASGMDTLYARMQQFATRVYGPLFTAGLHFWQLGESHYWGHNAIIRMKPFIEHCALAPLPGKGAFAGAILSHDFVEAALMRRAGWGVWIAYDLPGSYEELPPNLLDELKRDRRWCHGNLMNFRLFLVKGMHPVHRAVFLTGVMSYLSAPLWFFFLVLSTALLAVNTLMEPTYFLEPRQLYPLWPQWHPEKAVALFSTTIVLLFLPKLLSVILIWAKGAKGFGGKFKVTVSMLLEMLFSVLLAPVRMLFHTRFVLAAFLGWAATWNSPQRDDDSTPWIEAVKRHGPQTLLGACWALLVFWLNPSFLWWLAPIVVSLMLSIPVSVISSRTNLGVKARDEKFFLIPEEFEPPQELISTDQYTYENRWHALKQGFIRAVVDPRQNALACALATSRHRQAQPIEVVRMERVDQALKVGPAKLGNQERLMLLSDPVALGRLHERVWSEGHEEWLAAWRASIEADPHAPLLPLQPVGKASEPVPV.

6 helical membrane-spanning segments follow: residues 146–166 (ILLILMLGQTIVAGWYMKGIL), 200–220 (ILLLFGILFCWVSAGFWTALM), 519–539 (VFLTGVMSYLSAPLWFFFLVL), 576–596 (LFSTTIVLLFLPKLLSVILIW), 610–630 (TVSMLLEMLFSVLLAPVRMLF), and 686–706 (FLWWLAPIVVSLMLSIPVSVI).

It belongs to the glycosyltransferase 2 family. OpgH subfamily.

Its subcellular location is the cell inner membrane. The protein operates within glycan metabolism; osmoregulated periplasmic glucan (OPG) biosynthesis. Functionally, involved in the biosynthesis of osmoregulated periplasmic glucans (OPGs). The sequence is that of Glucans biosynthesis glucosyltransferase H from Pseudomonas savastanoi pv. phaseolicola (strain 1448A / Race 6) (Pseudomonas syringae pv. phaseolicola (strain 1448A / Race 6)).